We begin with the raw amino-acid sequence, 158 residues long: Nascent polypeptide-associated complex subunit beta (158 aa).

Disordered regions lie at residues 1 to 40 (MDQA…DKKL) and 119 to 158 (ESYQ…SKVE). Residues 16–31 (GKGKGTPRRKTKKVHK) show a composition bias toward basic residues. The region spanning 34 to 99 (GTDDKKLQTS…GEDKELTELV (66 aa)) is the NAC-A/B domain. The span at 137–152 (DDDDDDEIPDLVEGEN) shows a compositional bias: acidic residues.

Belongs to the NAC-beta family. In terms of assembly, part of the nascent polypeptide-associated complex (NAC), consisting of EGD2 and EGD1. NAC associates with ribosomes via EGD1.

The protein localises to the cytoplasm. It is found in the nucleus. Component of the nascent polypeptide-associated complex (NAC), a dynamic component of the ribosomal exit tunnel, protecting the emerging polypeptides from interaction with other cytoplasmic proteins to ensure appropriate nascent protein targeting. The NAC complex also promotes mitochondrial protein import by enhancing productive ribosome interactions with the outer mitochondrial membrane and blocks the inappropriate interaction of ribosomes translating non-secretory nascent polypeptides with translocation sites in the membrane of the endoplasmic reticulum. EGD1 may act as a transcription factor that exert a negative effect on the expression of several genes that are transcribed by RNA polymerase II. The chain is Nascent polypeptide-associated complex subunit beta (EGD1) from Ajellomyces capsulatus (strain NAm1 / WU24) (Darling's disease fungus).